Here is a 239-residue protein sequence, read N- to C-terminus: MGASQDDYSLVHKNILHSEDLLKYILETSAYPREHEQLKGLREVTEKHEWSSALVPADEGLFLSMLLKLMNAKRTIEIGVYTGYSLLTTALALPEDGKITAIDVNKSFFEIGLPFIQKAGVEHKINFIESEALPVLDQMLQEMKEEDLYDYAFVDADKSNYANYHERLVKLVRIGGAILYDNTLWYGSVAYPEYPGLYPEDEVDRLSFRNLNTFLAADPRVEISQVSIGDGVTICRRLY.

S-adenosyl-L-methionine is bound by residues valine 55, glutamate 77, 79 to 80 (GV), serine 85, aspartate 103, and alanine 132. Aspartate 155 is an a divalent metal cation binding site. Aspartate 157 provides a ligand contact to S-adenosyl-L-methionine. 2 residues coordinate a divalent metal cation: aspartate 181 and asparagine 182.

Belongs to the class I-like SAM-binding methyltransferase superfamily. Cation-dependent O-methyltransferase family. Mg(2+) is required as a cofactor. In terms of tissue distribution, mostly expressed in bulbs, and, to a lower extent, in stems and roots.

It carries out the reaction norbelladine + S-adenosyl-L-methionine = 4'-O-methylnorbelladine + S-adenosyl-L-homocysteine + H(+). The protein operates within alkaloid biosynthesis. Its function is as follows. 4'-O-methyltransferase converting norbelladine to 4'-O-methylnorbelladine. 4'-O-methylnorbelladine is a precursor to all Amaryllidaceae alkaloids such as galanthamine, lycorine and haemanthamine, and including haemanthamine- and crinamine-type alkaloids, promising anticancer agents. The protein is Norbelladine 4'-O-methyltransferase of Narcissus pseudonarcissus (Daffodil).